The sequence spans 194 residues: Inosine triphosphate pyrophosphatase (194 aa).

10–15 (TTNLKK) provides a ligand contact to ITP. Glu-36 is a Mg(2+) binding site. ITP contacts are provided by residues Lys-48, 66–67 (DT), Lys-83, Lys-166, and 171–172 (HR).

Belongs to the HAM1 NTPase family. In terms of assembly, homodimer. Requires Mg(2+) as cofactor. It depends on Mn(2+) as a cofactor.

The protein localises to the cytoplasm. It localises to the nucleus. It catalyses the reaction ITP + H2O = IMP + diphosphate + H(+). It carries out the reaction dITP + H2O = dIMP + diphosphate + H(+). The enzyme catalyses XTP + H2O = XMP + diphosphate + H(+). Pyrophosphatase that hydrolyzes non-canonical purine nucleotides such as inosine triphosphate (ITP), deoxyinosine triphosphate (dITP) or xanthosine 5'-triphosphate (XTP) to their respective monophosphate derivatives. The enzyme does not distinguish between the deoxy- and ribose forms. Probably excludes non-canonical purines from RNA and DNA precursor pools, thus preventing their incorporation into RNA and DNA and avoiding chromosomal lesions. The sequence is that of Inosine triphosphate pyrophosphatase from Encephalitozoon intestinalis (strain ATCC 50506) (Microsporidian parasite).